The following is a 307-amino-acid chain: 2-dehydropantoate 2-reductase (307 aa).

NADP(+)-binding positions include 7 to 12 (GSGAMG), N102, and A128. N102 is a binding site for substrate. K184 serves as the catalytic Proton donor. 3 residues coordinate substrate: N188, N192, and S255. Residue E268 participates in NADP(+) binding.

It belongs to the ketopantoate reductase family.

The protein localises to the cytoplasm. The catalysed reaction is (R)-pantoate + NADP(+) = 2-dehydropantoate + NADPH + H(+). It functions in the pathway cofactor biosynthesis; (R)-pantothenate biosynthesis; (R)-pantoate from 3-methyl-2-oxobutanoate: step 2/2. Its function is as follows. Catalyzes the NADPH-dependent reduction of ketopantoate into pantoic acid. The chain is 2-dehydropantoate 2-reductase (apbA) from Streptococcus pyogenes serotype M6 (strain ATCC BAA-946 / MGAS10394).